Here is a 275-residue protein sequence, read N- to C-terminus: NAD(P)H dehydrogenase [quinone] 1 (275 aa).

Residues histidine 13, 19-20, and glutamine 68 each bind FAD; that span reads FN. Phosphoserine is present on serine 83. An FAD-binding site is contributed by 105–108; it reads LQWF. 127–129 contributes to the substrate binding site; sequence AYT. FAD-binding positions include 149–152, tyrosine 157, and arginine 202; that span reads TTGG. The interval 226 to 275 is important for apoenzyme conformational stability; the sequence is PSSLFDLNFQAGFLLKKEIEDEQKNNKYGLSVGHHLGKPIPTDNQIKARK. Lysine 252 participates in a covalent cross-link: Glycyl lysine isopeptide (Lys-Gly) (interchain with G-Cter in SUMO2).

Belongs to the NAD(P)H dehydrogenase (quinone) family. As to quaternary structure, homodimer. Interacts with PDLIM4 isoform 2; this interaction stabilizes PDLIM4 isoform 2 in response to oxidative stress and protects it from ubiquitin-independent degradation by the core 20S proteasome. Interacts with TP73 (via SAM domain); this interaction is NADH-dependent, stabilizes TP73 in response to oxidative stress and protects it from ubiquitin-independent degradation by the 20S proteasome. Interacts with TP53; this interaction is NADH-dependent, stabilizes TP53 in response to oxidative stress and protects it from ubiquitin-independent degradation by the 20S proteasome. Requires FAD as cofactor.

Its subcellular location is the cytoplasm. The protein localises to the cytosol. It carries out the reaction a quinone + NADH + H(+) = a quinol + NAD(+). It catalyses the reaction a quinone + NADPH + H(+) = a quinol + NADP(+). The catalysed reaction is ubiquinone-10 + NADH + H(+) = ubiquinol-10 + NAD(+). The enzyme catalyses menadione + NADH + H(+) = menadiol + NAD(+). Functionally, flavin-containing quinone reductase that catalyzes two-electron reduction of quinones to hydroquinones using either NADH or NADPH as electron donors. In a ping-pong kinetic mechanism, the electrons are sequentially transferred from NAD(P)H to flavin cofactor and then from reduced flavin to the quinone, bypassing the formation of semiquinone and reactive oxygen species. Regulates cellular redox state primarily through quinone detoxification. Reduces components of plasma membrane redox system such as coenzyme Q and vitamin quinones, producing antioxidant hydroquinone forms. In the process may function as superoxide scavenger to prevent hydroquinone oxidation and facilitate excretion. Alternatively, can activate quinones and their derivatives by generating redox reactive hydroquinones with DNA cross-linking antitumor potential. Acts as a gatekeeper of the core 20S proteasome known to degrade proteins with unstructured regions. Upon oxidative stress, interacts with tumor suppressors TP53 and TP73 in a NADH-dependent way and inhibits their ubiquitin-independent degradation by the 20S proteasome. In Cavia porcellus (Guinea pig), this protein is NAD(P)H dehydrogenase [quinone] 1 (NQO1).